Here is a 150-residue protein sequence, read N- to C-terminus: Ribonuclease pancreatic delta-type (150 aa).

Residues 1-25 form the signal peptide; that stretch reads MGLEKSLILFSLLVLVLGWVQPSLG. R35 is a binding site for substrate. H37 acts as the Proton acceptor in catalysis. 4 disulfide bridges follow: C51–C110, C65–C121, C83–C136, and C90–C98. Substrate-binding positions include 66 to 70, K91, and R111; that span reads KRVNT. H145 (proton donor) is an active-site residue.

Belongs to the pancreatic ribonuclease family. In terms of assembly, monomer.

The protein resides in the secreted. It carries out the reaction an [RNA] containing cytidine + H2O = an [RNA]-3'-cytidine-3'-phosphate + a 5'-hydroxy-ribonucleotide-3'-[RNA].. It catalyses the reaction an [RNA] containing uridine + H2O = an [RNA]-3'-uridine-3'-phosphate + a 5'-hydroxy-ribonucleotide-3'-[RNA].. Endonuclease that catalyzes the cleavage of RNA on the 3' side of pyrimidine nucleotides. Acts on single-stranded and double-stranded RNA. The chain is Ribonuclease pancreatic delta-type from Rattus exulans (Polynesian rat).